The primary structure comprises 127 residues: MPPKGKGGKGAKGGAASGEAADKKAQTPKGGNAVKVRHILCEKHGKVMEAMEKLKSGVRFSEVATQYSEDKARQGGDLGWMTRGSMVGPFQDAAFALPVSTMDKPVYTDPPVKTKFGYHIIMVEGRK.

Positions 1–33 (MPPKGKGGKGAKGGAASGEAADKKAQTPKGGNA) are disordered. Residues 31 to 125 (GNAVKVRHIL…FGYHIIMVEG (95 aa)) form the PpiC domain.

Belongs to the PpiC/parvulin rotamase family. PIN4 subfamily.

The protein resides in the nucleus. The protein localises to the nucleolus. Its subcellular location is the cytoplasm. It localises to the cytoskeleton. It is found in the spindle. The catalysed reaction is [protein]-peptidylproline (omega=180) = [protein]-peptidylproline (omega=0). Its function is as follows. May be involved as a ribosomal RNA processing factor in ribosome biogenesis. Binds to DNA. The protein is Peptidyl-prolyl cis-trans isomerase NIMA-interacting 4 (pin4) of Xenopus tropicalis (Western clawed frog).